Here is a 249-residue protein sequence, read N- to C-terminus: Uridylate kinase (249 aa).

An ATP-binding site is contributed by 21-24 (KLSG). Gly63 serves as a coordination point for UMP. Gly64 and Arg68 together coordinate ATP. UMP contacts are provided by residues Asp84 and 145 to 152 (TGNPFVTT). Positions 172, 178, and 181 each coordinate ATP.

The protein belongs to the UMP kinase family. As to quaternary structure, homohexamer.

It is found in the cytoplasm. It catalyses the reaction UMP + ATP = UDP + ADP. It participates in pyrimidine metabolism; CTP biosynthesis via de novo pathway; UDP from UMP (UMPK route): step 1/1. Its activity is regulated as follows. Inhibited by UTP. Its function is as follows. Catalyzes the reversible phosphorylation of UMP to UDP. The polypeptide is Uridylate kinase (Francisella tularensis subsp. holarctica (strain FTNF002-00 / FTA)).